A 957-amino-acid polypeptide reads, in one-letter code: Glycine dehydrogenase (decarboxylating) (957 aa).

An N6-(pyridoxal phosphate)lysine modification is found at Lys-708.

This sequence belongs to the GcvP family. In terms of assembly, the glycine cleavage system is composed of four proteins: P, T, L and H. Requires pyridoxal 5'-phosphate as cofactor.

The catalysed reaction is N(6)-[(R)-lipoyl]-L-lysyl-[glycine-cleavage complex H protein] + glycine + H(+) = N(6)-[(R)-S(8)-aminomethyldihydrolipoyl]-L-lysyl-[glycine-cleavage complex H protein] + CO2. In terms of biological role, the glycine cleavage system catalyzes the degradation of glycine. The P protein binds the alpha-amino group of glycine through its pyridoxal phosphate cofactor; CO(2) is released and the remaining methylamine moiety is then transferred to the lipoamide cofactor of the H protein. This is Glycine dehydrogenase (decarboxylating) from Escherichia fergusonii (strain ATCC 35469 / DSM 13698 / CCUG 18766 / IAM 14443 / JCM 21226 / LMG 7866 / NBRC 102419 / NCTC 12128 / CDC 0568-73).